Consider the following 244-residue polypeptide: 1-(5-phosphoribosyl)-5-[(5-phosphoribosylamino)methylideneamino] imidazole-4-carboxamide isomerase (244 aa).

D10 acts as the Proton acceptor in catalysis. Residue D132 is the Proton donor of the active site.

This sequence belongs to the HisA/HisF family.

It is found in the cytoplasm. The enzyme catalyses 1-(5-phospho-beta-D-ribosyl)-5-[(5-phospho-beta-D-ribosylamino)methylideneamino]imidazole-4-carboxamide = 5-[(5-phospho-1-deoxy-D-ribulos-1-ylimino)methylamino]-1-(5-phospho-beta-D-ribosyl)imidazole-4-carboxamide. The protein operates within amino-acid biosynthesis; L-histidine biosynthesis; L-histidine from 5-phospho-alpha-D-ribose 1-diphosphate: step 4/9. This chain is 1-(5-phosphoribosyl)-5-[(5-phosphoribosylamino)methylideneamino] imidazole-4-carboxamide isomerase, found in Xanthomonas axonopodis pv. citri (strain 306).